The following is a 435-amino-acid chain: MKKTHITEQKFADLGLNPQVVEGLEKKGFEFCTPIQALALPVLLSGQDIAGQAQTGTGKTLAFLTATFNHLLTTHAHEGRQPTQPRAIIMAPTRELAIQIYNDAEPLIASTGIKAALAYGGESYDKQLAKLQGGVDVLIGTTGRIIDFYKQRVFNLNNIQAVVLDEADRMFDLGFIKDIRFLFRRMPAPQERLNMLFSATLSYRVQELAFEHMHNPEHVVVEPEQKTGHRIQEELFYPSNEDKMALLQTLIEEEWPDRAIIFANTKYKCESIWAHLAADGHRVGLLTGDVPQKKREKILEQFTQGSVDLLVATDVAARGLHIPQVTHVFNYDLPDDCEDYVHRIGRTGRAGASGHSISFACEDYAINLPAIEEYIEHTIPVSDYDSSALIQDLPAPVRTPSARNQQRRTNTGGARSGDRKSNNRRPRQPRQHKEA.

Positions 9-37 match the Q motif motif; it reads QKFADLGLNPQVVEGLEKKGFEFCTPIQA. Residues 40–219 form the Helicase ATP-binding domain; the sequence is LPVLLSGQDI…FEHMHNPEHV (180 aa). ATP is bound at residue 53-60; it reads AQTGTGKT. The short motif at 165–168 is the DEAD box element; sequence DEAD. Residues 245 to 390 form the Helicase C-terminal domain; that stretch reads ALLQTLIEEE…VSDYDSSALI (146 aa). The disordered stretch occupies residues 395–435; sequence APVRTPSARNQQRRTNTGGARSGDRKSNNRRPRQPRQHKEA. Over residues 401-413 the composition is skewed to polar residues; it reads SARNQQRRTNTGG. Residues 422-435 show a composition bias toward basic residues; sequence NNRRPRQPRQHKEA.

The protein belongs to the DEAD box helicase family. RhlB subfamily. Component of the RNA degradosome, which is a multiprotein complex involved in RNA processing and mRNA degradation.

The protein resides in the cytoplasm. The catalysed reaction is ATP + H2O = ADP + phosphate + H(+). DEAD-box RNA helicase involved in RNA degradation. Has RNA-dependent ATPase activity and unwinds double-stranded RNA. This chain is ATP-dependent RNA helicase RhlB, found in Vibrio vulnificus (strain YJ016).